The following is a 363-amino-acid chain: Trichothecene biosynthesis protein 14 (363 aa).

It belongs to the TRI14 family.

Functionally, part of the gene cluster that mediates the production of the antimicrobial trichothecene harzianum A (HA) that plays a role in Botrytis cinerea antagonistic activity and plant defense priming. The biosynthesis of harzianum A begins with the cyclization of farnesyl diphosphate to trichodiene and is catalyzed by the trichodiene synthase TRI5. Trichodiene undergoes a series of oxygenations catalyzed by the cytochrome P450 monooxygenase TRI4. TRI4 controls the addition of 3 oxygens at C-2, C-11, and the C-12, C-13-epoxide to form the intermediate isotrichodiol. Isotrichodiol then undergoes a non-enzymatic isomerization and cyclization to form 12,13-epoxytrichothec-9-ene (EPT) which is further converted to trichodermol by the cytochrome P450 monooxygenase TRI11 via C-4 hydroxylation. The last step of HA synthesis is esterification of an octatriendioyl moiety to the C-4 oxygen of trichodermol. The octatriendioyl moiety is probably produced by the polyketide synthase TRI17 and the esterification performed by the trichothecene O-acetyltransferase TRI3. The sequence is that of Trichothecene biosynthesis protein 14 from Trichoderma arundinaceum.